We begin with the raw amino-acid sequence, 330 residues long: Thioredoxin domain-containing protein 6 (330 aa).

Residues 11–115 enclose the Thioredoxin domain; the sequence is QVNISTQELW…QKTILDQLEA (105 aa). The NDK stretch occupies residues 157–303; that stretch reads ERTCTLAIIK…LFPSLKFSDK (147 aa). The interval 300-330 is disordered; that stretch reads FSDKDTEAPQGGEAEATAGPTEALCFPEDVD. Positions 307–322 are enriched in low complexity; that stretch reads APQGGEAEATAGPTEA.

Belongs to the NDK family. In terms of assembly, monomer and homodimer. Detected at very low levels in testis, lung and brain.

The protein resides in the cytoplasm. Its subcellular location is the cytoskeleton. It localises to the cilium axoneme. It is found in the dynein axonemal particle. Its function is as follows. May be a regulator of microtubule physiology. This Homo sapiens (Human) protein is Thioredoxin domain-containing protein 6.